The following is a 294-amino-acid chain: Glyceraldehyde-3-phosphate dehydrogenase (294 aa).

3 residues coordinate NAD(+): aspartate 19, lysine 63, and threonine 105. D-glyceraldehyde 3-phosphate is bound by residues serine 134–threonine 136 and threonine 165. Cysteine 135 serves as the catalytic Nucleophile. The tract at residues lysine 169 to asparagine 188 is disordered. Residues threonine 194–glycine 195 and arginine 217 contribute to the D-glyceraldehyde 3-phosphate site.

This sequence belongs to the glyceraldehyde-3-phosphate dehydrogenase family. In terms of assembly, homotetramer.

The protein resides in the cytoplasm. It catalyses the reaction D-glyceraldehyde 3-phosphate + phosphate + NAD(+) = (2R)-3-phospho-glyceroyl phosphate + NADH + H(+). The protein operates within carbohydrate degradation; glycolysis; pyruvate from D-glyceraldehyde 3-phosphate: step 1/5. Catalyzes the oxidative phosphorylation of glyceraldehyde 3-phosphate (G3P) to 1,3-bisphosphoglycerate (BPG) using the cofactor NAD. The first reaction step involves the formation of a hemiacetal intermediate between G3P and a cysteine residue, and this hemiacetal intermediate is then oxidized to a thioester, with concomitant reduction of NAD to NADH. The reduced NADH is then exchanged with the second NAD, and the thioester is attacked by a nucleophilic inorganic phosphate to produce BPG. In Serratia marcescens, this protein is Glyceraldehyde-3-phosphate dehydrogenase (gap).